A 376-amino-acid chain; its full sequence is Probable inactive protein kinase At3g63330 (376 aa).

In terms of domain architecture, Protein kinase spans 1–370; sequence MVERGPTVYL…VDEALQHPYF (370 aa).

It belongs to the protein kinase superfamily. Ser/Thr protein kinase family.

This chain is Probable inactive protein kinase At3g63330, found in Arabidopsis thaliana (Mouse-ear cress).